The primary structure comprises 139 residues: MKKNTLLNSELSYVIATLGHTDEITICDAGLPIPDASQRIDLALIQGIPTFIDTVKATLTEMQIEGVIVAEEFKTVSPQMHDELMTLIAAEEAQCSKSITVSYIPHEEFKIHTRESKAIVRTGECTPYANVIFQSGVVF.

The active-site Proton donor is histidine 20. Substrate is bound by residues aspartate 28, histidine 106, and 128–130 (YAN).

The protein belongs to the RbsD / FucU family. RbsD subfamily. As to quaternary structure, homodecamer.

It is found in the cytoplasm. It catalyses the reaction beta-D-ribopyranose = beta-D-ribofuranose. The protein operates within carbohydrate metabolism; D-ribose degradation; D-ribose 5-phosphate from beta-D-ribopyranose: step 1/2. Catalyzes the interconversion of beta-pyran and beta-furan forms of D-ribose. This is D-ribose pyranase from Aliivibrio fischeri (strain ATCC 700601 / ES114) (Vibrio fischeri).